Here is a 310-residue protein sequence, read N- to C-terminus: Oxygen-dependent coproporphyrinogen-III oxidase (310 aa).

Serine 97 contributes to the substrate binding site. The a divalent metal cation site is built by histidine 101 and histidine 111. Residue histidine 111 is the Proton donor of the active site. A substrate-binding site is contributed by 113-115 (NFR). Residues histidine 150 and histidine 180 each contribute to the a divalent metal cation site. Residues 245–280 (YVEFNLLYDRGTRFGLEFGGRTESILMSLPPRVVWR) form an important for dimerization region. Residue 263-265 (GGR) participates in substrate binding.

The protein belongs to the aerobic coproporphyrinogen-III oxidase family. Homodimer. Requires a divalent metal cation as cofactor.

The protein localises to the cytoplasm. The enzyme catalyses coproporphyrinogen III + O2 + 2 H(+) = protoporphyrinogen IX + 2 CO2 + 2 H2O. It participates in porphyrin-containing compound metabolism; protoporphyrin-IX biosynthesis; protoporphyrinogen-IX from coproporphyrinogen-III (O2 route): step 1/1. Functionally, involved in the heme biosynthesis. Catalyzes the aerobic oxidative decarboxylation of propionate groups of rings A and B of coproporphyrinogen-III to yield the vinyl groups in protoporphyrinogen-IX. The polypeptide is Oxygen-dependent coproporphyrinogen-III oxidase (Coxiella burnetii (strain RSA 331 / Henzerling II)).